A 967-amino-acid chain; its full sequence is RNA polymerase-associated protein RapA (967 aa).

Residues 163–333 form the Helicase ATP-binding domain; that stretch reads EVGQRHAPRV…FARLRLLDPN (171 aa). 176 to 183 serves as a coordination point for ATP; that stretch reads DEVGLGKT. A DEAH box motif is present at residues 279–282; that stretch reads DEAH. In terms of domain architecture, Helicase C-terminal spans 489 to 643; it reads RVEWLLNYLT…TCPTGRTIYD (155 aa).

It belongs to the SNF2/RAD54 helicase family. RapA subfamily. As to quaternary structure, interacts with the RNAP. Has a higher affinity for the core RNAP than for the holoenzyme. Its ATPase activity is stimulated by binding to RNAP.

Transcription regulator that activates transcription by stimulating RNA polymerase (RNAP) recycling in case of stress conditions such as supercoiled DNA or high salt concentrations. Probably acts by releasing the RNAP, when it is trapped or immobilized on tightly supercoiled DNA. Does not activate transcription on linear DNA. Probably not involved in DNA repair. This Pectobacterium carotovorum subsp. carotovorum (strain PC1) protein is RNA polymerase-associated protein RapA.